A 227-amino-acid chain; its full sequence is Cytochrome c oxidase subunit 2 (227 aa).

Over 1 to 14 the chain is Mitochondrial intermembrane; that stretch reads MAYTFQLGLQDATS. A helical membrane pass occupies residues 15–45; it reads PIMEELTNFHDHTLMIVFLISSLVLYVISLM. Residues 46–59 are Mitochondrial matrix-facing; that stretch reads LTTKLTHTNTMDAQ. A helical transmembrane segment spans residues 60–87; it reads EVETIWTILPAVILILIALPSLRILYMM. The Mitochondrial intermembrane segment spans residues 88 to 227; that stretch reads DEINNPVLTV…HFENWSASMI (140 aa). Residues H161, C196, E198, C200, H204, and M207 each contribute to the Cu cation site. E198 contacts Mg(2+).

This sequence belongs to the cytochrome c oxidase subunit 2 family. As to quaternary structure, component of the cytochrome c oxidase (complex IV, CIV), a multisubunit enzyme composed of 14 subunits. The complex is composed of a catalytic core of 3 subunits MT-CO1, MT-CO2 and MT-CO3, encoded in the mitochondrial DNA, and 11 supernumerary subunits COX4I, COX5A, COX5B, COX6A, COX6B, COX6C, COX7A, COX7B, COX7C, COX8 and NDUFA4, which are encoded in the nuclear genome. The complex exists as a monomer or a dimer and forms supercomplexes (SCs) in the inner mitochondrial membrane with NADH-ubiquinone oxidoreductase (complex I, CI) and ubiquinol-cytochrome c oxidoreductase (cytochrome b-c1 complex, complex III, CIII), resulting in different assemblies (supercomplex SCI(1)III(2)IV(1) and megacomplex MCI(2)III(2)IV(2)). Found in a complex with TMEM177, COA6, COX18, COX20, SCO1 and SCO2. Interacts with TMEM177 in a COX20-dependent manner. Interacts with COX20. Interacts with COX16. Cu cation is required as a cofactor.

It is found in the mitochondrion inner membrane. The enzyme catalyses 4 Fe(II)-[cytochrome c] + O2 + 8 H(+)(in) = 4 Fe(III)-[cytochrome c] + 2 H2O + 4 H(+)(out). Its function is as follows. Component of the cytochrome c oxidase, the last enzyme in the mitochondrial electron transport chain which drives oxidative phosphorylation. The respiratory chain contains 3 multisubunit complexes succinate dehydrogenase (complex II, CII), ubiquinol-cytochrome c oxidoreductase (cytochrome b-c1 complex, complex III, CIII) and cytochrome c oxidase (complex IV, CIV), that cooperate to transfer electrons derived from NADH and succinate to molecular oxygen, creating an electrochemical gradient over the inner membrane that drives transmembrane transport and the ATP synthase. Cytochrome c oxidase is the component of the respiratory chain that catalyzes the reduction of oxygen to water. Electrons originating from reduced cytochrome c in the intermembrane space (IMS) are transferred via the dinuclear copper A center (CU(A)) of subunit 2 and heme A of subunit 1 to the active site in subunit 1, a binuclear center (BNC) formed by heme A3 and copper B (CU(B)). The BNC reduces molecular oxygen to 2 water molecules using 4 electrons from cytochrome c in the IMS and 4 protons from the mitochondrial matrix. The polypeptide is Cytochrome c oxidase subunit 2 (MT-CO2) (Niviventer culturatus (Oldfield white-bellied rat)).